We begin with the raw amino-acid sequence, 353 residues long: Rhodopsin (353 aa).

At 1-36 (MNGTEGPYFYIPMVNTTGIVRSPYEYPQYYLVNPAA) the chain is on the extracellular side. Asn2 and Asn15 each carry an N-linked (GlcNAc...) asparagine glycan. The helical transmembrane segment at 37-61 (YAALGAYMFLLILVGFPINFLTLYV) threads the bilayer. Over 62–73 (TIEHKKLRTPLN) the chain is Cytoplasmic. A helical membrane pass occupies residues 74–96 (YILLNLAVANLFMVFGGFTTTMY). At 97–110 (TSMHGYFVLGRLGC) the chain is on the extracellular side. A disulfide bridge connects residues Cys110 and Cys187. Residues 111-133 (NLEGFFATLGGEIALWSLVVLAI) form a helical membrane-spanning segment. Residues 134–136 (ERW) carry the 'Ionic lock' involved in activated form stabilization motif. The Cytoplasmic portion of the chain corresponds to 134–152 (ERWMVVCKPISNFRFGEDH). Residues 153-173 (AIMGLAFTWVMAAACAVPPLV) form a helical membrane-spanning segment. Topologically, residues 174-202 (GWSRYIPEGMQCSCGIDYYTRAEGFNNES) are extracellular. The N-linked (GlcNAc...) asparagine glycan is linked to Asn200. The helical transmembrane segment at 203–224 (FVIYMFVCHFLIPLVVVFFCYG) threads the bilayer. Topologically, residues 225–252 (RLLCAVKEAAAAQQESETTQRAEREVSR) are cytoplasmic. A helical membrane pass occupies residues 253 to 274 (MVVIMVVAFLICWCPYAGVAWY). Residues 275 to 286 (IFTHQGSEFGPL) are Extracellular-facing. The chain crosses the membrane as a helical span at residues 287–308 (FMTFPAFFAKSSSIYNPMIYIC). Residue Lys296 is modified to N6-(retinylidene)lysine. At 309-353 (MNKQFRHCMITTLCCGKNPFEEEEGASTTSKTEASSVSSSSVSPA) the chain is on the cytoplasmic side. S-palmitoyl cysteine attachment occurs at residues Cys322 and Cys323. Positions 330 to 353 (EEEGASTTSKTEASSVSSSSVSPA) are disordered. Low complexity predominate over residues 334 to 353 (ASTTSKTEASSVSSSSVSPA).

The protein belongs to the G-protein coupled receptor 1 family. Opsin subfamily. Phosphorylated on some or all of the serine and threonine residues present in the C-terminal region. Post-translationally, contains one covalently linked retinal chromophore.

It localises to the membrane. It is found in the cell projection. The protein resides in the cilium. Its subcellular location is the photoreceptor outer segment. Functionally, photoreceptor required for image-forming vision at low light intensity. While most salt water fish species use retinal as chromophore, most freshwater fish use 3-dehydroretinal, or a mixture of retinal and 3-dehydroretinal. Light-induced isomerization of 11-cis to all-trans retinal triggers a conformational change that activates signaling via G-proteins. Subsequent receptor phosphorylation mediates displacement of the bound G-protein alpha subunit by arrestin and terminates signaling. The polypeptide is Rhodopsin (rho) (Chelon saliens (Leaping mullet)).